Reading from the N-terminus, the 335-residue chain is Glycerol-3-phosphate dehydrogenase [NAD(P)+] (335 aa).

NADPH contacts are provided by serine 15, tyrosine 16, histidine 36, and lysine 110. Sn-glycerol 3-phosphate is bound by residues lysine 110, glycine 139, and threonine 141. Alanine 143 serves as a coordination point for NADPH. Residues lysine 195, aspartate 248, serine 258, arginine 259, and asparagine 260 each coordinate sn-glycerol 3-phosphate. Lysine 195 serves as the catalytic Proton acceptor. Residue arginine 259 participates in NADPH binding. The NADPH site is built by valine 283 and glutamate 285.

Belongs to the NAD-dependent glycerol-3-phosphate dehydrogenase family.

Its subcellular location is the cytoplasm. The enzyme catalyses sn-glycerol 3-phosphate + NAD(+) = dihydroxyacetone phosphate + NADH + H(+). It catalyses the reaction sn-glycerol 3-phosphate + NADP(+) = dihydroxyacetone phosphate + NADPH + H(+). It functions in the pathway membrane lipid metabolism; glycerophospholipid metabolism. In terms of biological role, catalyzes the reduction of the glycolytic intermediate dihydroxyacetone phosphate (DHAP) to sn-glycerol 3-phosphate (G3P), the key precursor for phospholipid synthesis. This Mannheimia succiniciproducens (strain KCTC 0769BP / MBEL55E) protein is Glycerol-3-phosphate dehydrogenase [NAD(P)+].